The chain runs to 656 residues: Chromosomal replication initiator protein DnaA (656 aa).

The domain I, interacts with DnaA modulators stretch occupies residues 1 to 100; that stretch reads MADVPADLAA…TAGEPAGPAP (100 aa). A disordered region spans residues 91 to 313; it reads TAGEPAGPAP…PAPATGPGEP (223 aa). Over residues 97–109 the composition is skewed to pro residues; sequence GPAPQAPQSPPSR. A domain II region spans residues 101-315; the sequence is QAPQSPPSRP…PATGPGEPTA (215 aa). 2 stretches are compositionally biased toward basic and acidic residues: residues 126 to 144 and 231 to 273; these read GREE…RNRA and QRGD…RDLP. Residues 291–313 show a composition bias toward low complexity; the sequence is GPATGAPGPLAAQPAPATGPGEP. Residues 316-532 are domain III, AAA+ region; the sequence is RLNPKYLFDT…GALIRVTAFA (217 aa). The ATP site is built by glycine 360, glycine 362, lysine 363, and threonine 364. Positions 533-656 are domain IV, binds dsDNA; it reads SLNRQPVDLG…TELTNRIKNG (124 aa).

It belongs to the DnaA family. Oligomerizes as a right-handed, spiral filament on DNA at oriC.

It localises to the cytoplasm. Its function is as follows. Plays an essential role in the initiation and regulation of chromosomal replication. ATP-DnaA binds to the origin of replication (oriC) to initiate formation of the DNA replication initiation complex once per cell cycle. Binds the DnaA box (a 9 base pair repeat at the origin) and separates the double-stranded (ds)DNA. Forms a right-handed helical filament on oriC DNA; dsDNA binds to the exterior of the filament while single-stranded (ss)DNA is stabiized in the filament's interior. The ATP-DnaA-oriC complex binds and stabilizes one strand of the AT-rich DNA unwinding element (DUE), permitting loading of DNA polymerase. After initiation quickly degrades to an ADP-DnaA complex that is not apt for DNA replication. Binds acidic phospholipids. This Streptomyces coelicolor (strain ATCC BAA-471 / A3(2) / M145) protein is Chromosomal replication initiator protein DnaA.